Here is a 129-residue protein sequence, read N- to C-terminus: Mitochondrial pyruvate carrier 2 (129 aa).

The Mitochondrial matrix segment spans residues S2–T22. A helical transmembrane segment spans residues V23–F39. Topologically, residues S40–N54 are mitochondrial intermembrane. Residues L55 to I71 form a helical membrane-spanning segment. Topologically, residues K72–R74 are mitochondrial matrix. A helical membrane pass occupies residues N75–Y91. Over Q92 to R129 the chain is Mitochondrial intermembrane.

Belongs to the mitochondrial pyruvate carrier (MPC) (TC 2.A.105) family. As to quaternary structure, the functional 150 kDa pyruvate import complex is a heteromer of MPC1 and either MPC2 or MPC3.

The protein localises to the mitochondrion. It is found in the mitochondrion inner membrane. It carries out the reaction pyruvate(out) + H(+)(out) = pyruvate(in) + H(+)(in). Its function is as follows. Mediates the uptake of pyruvate into mitochondria. The protein is Mitochondrial pyruvate carrier 2 of Saccharomyces cerevisiae (strain ATCC 204508 / S288c) (Baker's yeast).